We begin with the raw amino-acid sequence, 452 residues long: Sesamin methylene transferase (452 aa).

It belongs to the GcvT family. As to quaternary structure, homotrimer.

It carries out the reaction (+)-sesamin + (6S)-5,6,7,8-tetrahydrofolyl-(gamma-L-Glu)(n) = (+)-sesamin monocatechol + (6R)-5,10-methylenetetrahydrofolyl-(gamma-L-Glu)(n). The enzyme catalyses (+)-sesamin monocatechol + (6S)-5,6,7,8-tetrahydrofolyl-(gamma-L-Glu)(n) = (+)-sesamin dicatechol + (6R)-5,10-methylenetetrahydrofolyl-(gamma-L-Glu)(n). Converts sesamin into sesamin mono- and di-catechol. Catalyzes a ring cleavage to transfer the methylene group to tetrahydrofolate (THF). Also active with (+)-episesamin, (-)-asarinin, sesaminol, (+)-sesamolin and piperine. This chain is Sesamin methylene transferase, found in Sinomonas sp. (strain No.22).